Consider the following 154-residue polypeptide: Myoglobin (154 aa).

One can recognise a Globin domain in the interval 2 to 148; that stretch reads GLSDGEWHLV…FRNDIAAKYK (147 aa). Serine 4 carries the post-translational modification Phosphoserine. Residue histidine 65 coordinates nitrite. Histidine 65 contacts O2. The residue at position 68 (threonine 68) is a Phosphothreonine. Residue histidine 94 participates in heme b binding.

The protein belongs to the globin family. As to quaternary structure, monomeric.

It localises to the cytoplasm. It is found in the sarcoplasm. The catalysed reaction is Fe(III)-heme b-[protein] + nitric oxide + H2O = Fe(II)-heme b-[protein] + nitrite + 2 H(+). The enzyme catalyses H2O2 + AH2 = A + 2 H2O. In terms of biological role, monomeric heme protein which primary function is to store oxygen and facilitate its diffusion within muscle tissues. Reversibly binds oxygen through a pentacoordinated heme iron and enables its timely and efficient release as needed during periods of heightened demand. Depending on the oxidative conditions of tissues and cells, and in addition to its ability to bind oxygen, it also has a nitrite reductase activity whereby it regulates the production of bioactive nitric oxide. Under stress conditions, like hypoxia and anoxia, it also protects cells against reactive oxygen species thanks to its pseudoperoxidase activity. The protein is Myoglobin (MB) of Halichoerus grypus (Gray seal).